A 325-amino-acid polypeptide reads, in one-letter code: Glycerol-3-phosphate dehydrogenase [NAD(P)+] (325 aa).

The NADPH site is built by Trp11, Arg30, and Lys103. The sn-glycerol 3-phosphate site is built by Lys103, Gly131, and Ser133. Residue Ala135 participates in NADPH binding. Sn-glycerol 3-phosphate is bound by residues Lys186, Asp242, Ser252, Arg253, and Asn254. Lys186 functions as the Proton acceptor in the catalytic mechanism. Arg253 lines the NADPH pocket. Val279 and Glu281 together coordinate NADPH.

It belongs to the NAD-dependent glycerol-3-phosphate dehydrogenase family.

The protein localises to the cytoplasm. It catalyses the reaction sn-glycerol 3-phosphate + NAD(+) = dihydroxyacetone phosphate + NADH + H(+). The enzyme catalyses sn-glycerol 3-phosphate + NADP(+) = dihydroxyacetone phosphate + NADPH + H(+). Its pathway is membrane lipid metabolism; glycerophospholipid metabolism. Catalyzes the reduction of the glycolytic intermediate dihydroxyacetone phosphate (DHAP) to sn-glycerol 3-phosphate (G3P), the key precursor for phospholipid synthesis. In Wolbachia pipientis subsp. Culex pipiens (strain wPip), this protein is Glycerol-3-phosphate dehydrogenase [NAD(P)+].